The sequence spans 430 residues: Dihydroorotase (430 aa).

2 residues coordinate Zn(2+): H57 and H59. Residues 59 to 61 (HLR) and N91 each bind substrate. Residues D151, H178, and H231 each contribute to the Zn(2+) site. Position 277 (N277) interacts with substrate. D304 is a binding site for Zn(2+). The active site involves D304. Residues H308 and 322 to 323 (PG) contribute to the substrate site.

It belongs to the metallo-dependent hydrolases superfamily. DHOase family. Class I DHOase subfamily. Requires Zn(2+) as cofactor.

It carries out the reaction (S)-dihydroorotate + H2O = N-carbamoyl-L-aspartate + H(+). It functions in the pathway pyrimidine metabolism; UMP biosynthesis via de novo pathway; (S)-dihydroorotate from bicarbonate: step 3/3. Catalyzes the reversible cyclization of carbamoyl aspartate to dihydroorotate. This chain is Dihydroorotase, found in Mycobacterium tuberculosis (strain ATCC 25618 / H37Rv).